An 85-amino-acid polypeptide reads, in one-letter code: Toxin To6 (85 aa).

An N-terminal signal peptide occupies residues 1–20; the sequence is MSIFPIILALLLIGLDEGEA. In terms of domain architecture, LCN-type CS-alpha/beta spans 21–83; sequence LDGYPLSKNN…EMYPGRLPCN (63 aa). 4 disulfides stabilise this stretch: Cys32–Cys82, Cys36–Cys59, Cys42–Cys64, and Cys46–Cys66.

In terms of tissue distribution, expressed by the venom gland.

The protein localises to the secreted. Functionally, beta toxins bind voltage-independently at site-4 of sodium channels (Nav) and shift the voltage of activation toward more negative potentials thereby affecting sodium channel activation and promoting spontaneous and repetitive firing. This Tityus obscurus (Amazonian scorpion) protein is Toxin To6.